The chain runs to 217 residues: MOB kinase activator 3A (217 aa).

Residues Cys83, Cys88, His165, and His170 each coordinate Zn(2+).

Belongs to the MOB1/phocein family.

In terms of biological role, may regulate the activity of kinases. The polypeptide is MOB kinase activator 3A (MOB3A) (Pongo abelii (Sumatran orangutan)).